The primary structure comprises 573 residues: Dihydroxy-acid dehydratase (573 aa).

A [2Fe-2S] cluster-binding site is contributed by C62. D94 lines the Mg(2+) pocket. Residue C135 coordinates [2Fe-2S] cluster. Residues D136 and K137 each coordinate Mg(2+). Residue K137 is modified to N6-carboxylysine. Residue C212 coordinates [2Fe-2S] cluster. Mg(2+) is bound at residue E463. Catalysis depends on S489, which acts as the Proton acceptor.

Belongs to the IlvD/Edd family. As to quaternary structure, homodimer. It depends on [2Fe-2S] cluster as a cofactor. The cofactor is Mg(2+).

The catalysed reaction is (2R)-2,3-dihydroxy-3-methylbutanoate = 3-methyl-2-oxobutanoate + H2O. It catalyses the reaction (2R,3R)-2,3-dihydroxy-3-methylpentanoate = (S)-3-methyl-2-oxopentanoate + H2O. The protein operates within amino-acid biosynthesis; L-isoleucine biosynthesis; L-isoleucine from 2-oxobutanoate: step 3/4. It functions in the pathway amino-acid biosynthesis; L-valine biosynthesis; L-valine from pyruvate: step 3/4. Functions in the biosynthesis of branched-chain amino acids. Catalyzes the dehydration of (2R,3R)-2,3-dihydroxy-3-methylpentanoate (2,3-dihydroxy-3-methylvalerate) into 2-oxo-3-methylpentanoate (2-oxo-3-methylvalerate) and of (2R)-2,3-dihydroxy-3-methylbutanoate (2,3-dihydroxyisovalerate) into 2-oxo-3-methylbutanoate (2-oxoisovalerate), the penultimate precursor to L-isoleucine and L-valine, respectively. The sequence is that of Dihydroxy-acid dehydratase from Renibacterium salmoninarum (strain ATCC 33209 / DSM 20767 / JCM 11484 / NBRC 15589 / NCIMB 2235).